Here is a 480-residue protein sequence, read N- to C-terminus: Membrane-bound lytic murein transglycosylase F (480 aa).

The signal sequence occupies residues 1–15; the sequence is MNRILLTLLTLTLLA. The interval 16–259 is non-LT domain; sequence GCQRVAVEET…HLDEKYFAHV (244 aa). Residues 260–480 form an LT domain region; sequence KRFDYVDTRA…EKAITGAQPE (221 aa). The active site involves glutamate 304.

It in the N-terminal section; belongs to the bacterial solute-binding protein 3 family. This sequence in the C-terminal section; belongs to the transglycosylase Slt family.

The protein localises to the cell outer membrane. The catalysed reaction is Exolytic cleavage of the (1-&gt;4)-beta-glycosidic linkage between N-acetylmuramic acid (MurNAc) and N-acetylglucosamine (GlcNAc) residues in peptidoglycan, from either the reducing or the non-reducing ends of the peptidoglycan chains, with concomitant formation of a 1,6-anhydrobond in the MurNAc residue.. Murein-degrading enzyme that degrades murein glycan strands and insoluble, high-molecular weight murein sacculi, with the concomitant formation of a 1,6-anhydromuramoyl product. Lytic transglycosylases (LTs) play an integral role in the metabolism of the peptidoglycan (PG) sacculus. Their lytic action creates space within the PG sacculus to allow for its expansion as well as for the insertion of various structures such as secretion systems and flagella. This is Membrane-bound lytic murein transglycosylase F from Shewanella woodyi (strain ATCC 51908 / MS32).